A 141-amino-acid polypeptide reads, in one-letter code: Hemoglobin subunit alpha-D (141 aa).

In terms of domain architecture, Globin spans methionine 1–arginine 141. 2 residues coordinate heme b: histidine 58 and histidine 87.

It belongs to the globin family. As to quaternary structure, heterotetramer of two alpha-D chains and two beta chains. Red blood cells.

Functionally, involved in oxygen transport from the lung to the various peripheral tissues. This Aegypius monachus (Cinereous vulture) protein is Hemoglobin subunit alpha-D (HBAD).